The following is a 334-amino-acid chain: Proline-serine-threonine phosphatase-interacting protein 2 (334 aa).

In terms of domain architecture, F-BAR spans 4-264 (SLFKGNFWSA…SLEMCSIQRD (261 aa)). The stretch at 66 to 166 (GQSEINTLKR…AVSRSANLVN (101 aa)) forms a coiled coil. The disordered stretch occupies residues 295-322 (VPAGKATGPNLARRGPLPIPKSSPDDPN). 2 positions are modified to phosphotyrosine: Y323 and Y329.

Phosphorylated on tyrosine.

It localises to the cytoplasm. It is found in the membrane. In terms of biological role, binds to F-actin. May be involved in regulation of the actin cytoskeleton. The chain is Proline-serine-threonine phosphatase-interacting protein 2 (PSTPIP2) from Homo sapiens (Human).